The following is a 173-amino-acid chain: Alpha-crystallin A chain (173 aa).

At M1 the chain carries N-acetylmethionine. Residues 1–63 are required for complex formation with BFSP1 and BFSP2; that stretch reads MDVTIQHPWF…RTVLDSGISE (63 aa). Position 6 is a deamidated glutamine; partial (Q6). S45 carries the post-translational modification Phosphoserine. Q50 carries the deamidated glutamine; partial modification. A sHSP domain is found at 52-162; the sequence is LFRTVLDSGI…GHSERAIPVS (111 aa). K70 is modified (N6-acetyllysine). A Deamidated glutamine; partial modification is found at Q90. K99 bears the N6-acetyllysine mark. H100 serves as a coordination point for Zn(2+). The residue at position 101 (N101) is a Deamidated asparagine; partial. Zn(2+)-binding residues include E102 and H107. A Phosphoserine modification is found at S122. N123 is modified (deamidated asparagine; partial). Positions 145 to 173 are disordered; sequence KVQSGLDAGHSERAIPVSREEKPSSAPSS. Q147 bears the Deamidated glutamine; partial mark. A compositionally biased stretch (basic and acidic residues) spans 153–167; sequence GHSERAIPVSREEKP. H154 contacts Zn(2+). A glycan (O-linked (GlcNAc) serine) is linked at S162.

It belongs to the small heat shock protein (HSP20) family. In terms of assembly, heteromer composed of three CRYAA and one CRYAB subunits. Inter-subunit bridging via zinc ions enhances stability, which is crucial as there is no protein turn over in the lens. Can also form homodimers and homotetramers (dimers of dimers) which serve as the building blocks of homooligomers. Within homooligomers, the zinc-binding motif is created from residues of 3 different molecules. His-100 and Glu-102 from one molecule are ligands of the zinc ion, and His-107 and His-154 residues from additional molecules complete the site with tetrahedral coordination geometry. Part of a complex required for lens intermediate filament formation composed of BFSP1, BFSP2 and CRYAA. In terms of processing, acetylation at Lys-70 may increase chaperone activity. Post-translationally, undergoes age-dependent proteolytical cleavage at the C-terminus.

The protein resides in the cytoplasm. It localises to the nucleus. In terms of biological role, contributes to the transparency and refractive index of the lens. Acts as a chaperone, preventing aggregation of various proteins under a wide range of stress conditions. Required for the correct formation of lens intermediate filaments as part of a complex composed of BFSP1, BFSP2 and CRYAA. The polypeptide is Alpha-crystallin A chain (CRYAA) (Cavia porcellus (Guinea pig)).